We begin with the raw amino-acid sequence, 478 residues long: MHHFVPDFDTDDDYVNNHNSSLNHLPRKSITTMGEDDDLMELLWQNGQVVVQNQRLHTKKPSSSPPKLLPSMDPQQQPSSDQNLFIQEDEMTSWLHYPLRDDDFCSDLLFSAAPTATATATVSQVTAARPPVSSTNESRPPVRNFMNFSRLRGDFNNGRGGESGPLLSKAVVRESTQVSPSATPSAAASESGLTRRTDGTDSSAVAGGGAYNRKGKAVAMTAPAIEITGTSSSVVSKSEIEPEKTNVDDRKRKEREATTTDETESRSEETKQARVSTTSTKRSRAAEVHNLSERKRRDRINERMKALQELIPRCNKSDKASMLDEAIEYMKSLQLQIQMMSMGCGMMPMMYPGMQQYMPHMAMGMGMNQPIPPPSFMPFPNMLAAQRPLPTQTHMAGSGPQYPVHASDPSRVFVPNQQYDPTSGQPQYPAGYTDPYQQFRGLHPTQPPQFQNQATSYPSSSRVSSSKESEDHGNHTTG.

A Phosphothreonine; by CK2 modification is found at Thr-10. Disordered regions lie at residues 56 to 80, 122 to 144, 172 to 210, 230 to 294, and 391 to 478; these read LHTK…QPSS, VSQV…PVRN, VRES…GGGA, TSSS…LSER, and TQTH…HTTG. A compositionally biased stretch (low complexity) spans 69-80; the sequence is LPSMDPQQQPSS. Over residues 179-189 the composition is skewed to low complexity; it reads SPSATPSAAAS. A Phosphothreonine; by CK2 modification is found at Thr-197. Ser-202 is subject to Phosphoserine; by CK2. Basic and acidic residues-rich tracts occupy residues 238 to 272 and 284 to 294; these read SEIE…ETKQ and RAAEVHNLSER. Positions 284-333 constitute a bHLH domain; the sequence is RAAEVHNLSERKRRDRINERMKALQELIPRCNKSDKASMLDEAIEYMKSL. Over residues 415 to 426 the composition is skewed to polar residues; the sequence is PNQQYDPTSGQP. Phosphoserine; by CK2 is present on residues Ser-464, Ser-465, Ser-466, and Ser-469. Residues 465–478 are compositionally biased toward basic and acidic residues; that stretch reads SSKESEDHGNHTTG.

Homodimer. Interacts with the photoactivated conformer (Pfr) of phytochromes A and B, PHYA and PHYB. Also interacts with APRR1/TOC1. Binds to RGL2, RGA and FHY3 (via N-terminus). Associates to PTAC12/HMR/PAP5 which acts as a transcriptional coactivator. Binds directly to PCH1 and PCHL; this interaction facilitates its association with phyB and its subsequent light-induced degradation. Post-translationally, phosphorylated at Thr-10, Thr-197, Ser-202, Ser-464, Ser-465, Ser-466 and Ser-469 by CK2. Phosphorylated and ubiquitinated after an exposure to light (especially red and far-red), in a phytochrome-dependent manner. Modified proteins undergo a proteasome-dependent degradation. Its stability and degradation plays a central role in photomorphogenesis of seedlings. Mainly expressed in leaves, stems and seedlings, and, to a lower extent, in fruits, flowers and roots.

It localises to the nucleus. With respect to regulation, DNA-binding ability is inhibited by PCH1 and PCHL to negatively regulate the expressions of its target genes. Its function is as follows. Transcription activator. Negatively regulates chlorophyll biosynthesis and seed germination in the dark, and lightinduced degradation of PIF1 relieves this negative regulation to promote photomorphogenesis. Binds to the G-box motif (5'-CACGTG-3') found in many light-regulated promoters. Promotes the expression of SOM, and thus modulates responses to abscisic acid (ABA) and gibberellic acid (GA). The sequence is that of Transcription factor PIF1 from Arabidopsis thaliana (Mouse-ear cress).